We begin with the raw amino-acid sequence, 202 residues long: Ribosomal RNA small subunit methyltransferase G (202 aa).

S-adenosyl-L-methionine contacts are provided by residues G75, F80, 125–126 (VQ), and R139.

The protein belongs to the methyltransferase superfamily. RNA methyltransferase RsmG family.

The protein resides in the cytoplasm. Its function is as follows. Specifically methylates the N7 position of a guanine in 16S rRNA. This Mesomycoplasma hyopneumoniae (strain 232) (Mycoplasma hyopneumoniae) protein is Ribosomal RNA small subunit methyltransferase G.